Reading from the N-terminus, the 457-residue chain is Protein OS-9 homolog (457 aa).

An N-terminal signal peptide occupies residues 1-22 (MIFLPVTSVVFAISWIYSGVSA). N-linked (GlcNAc...) asparagine glycans are attached at residues Asn-47 and Asn-71. Residues 104–222 (NPIEMNTVPI…RLFLPQLCEL (119 aa)) enclose the MRH domain. Residue Trp-116 participates in a mannooligosaccharide derivative binding. N-linked (GlcNAc...) asparagine glycosylation is found at Asn-142 and Asn-147. Disulfide bonds link Cys-174/Cys-208 and Cys-189/Cys-220. Positions 175, 181, 204, and 210 each coordinate a mannooligosaccharide derivative. Residue Asn-389 is glycosylated (N-linked (GlcNAc...) asparagine).

It belongs to the OS-9 family. As to quaternary structure, interacts with missfolded ER lumenal proteins.

Its subcellular location is the endoplasmic reticulum membrane. Lectin involved in the quality control of the secretory pathway. As a member of the endoplasmic reticulum-associated degradation lumenal (ERAD-L) surveillance system, targets misfolded endoplasmic reticulum lumenal glycoproteins for degradation. In Kluyveromyces lactis (strain ATCC 8585 / CBS 2359 / DSM 70799 / NBRC 1267 / NRRL Y-1140 / WM37) (Yeast), this protein is Protein OS-9 homolog (YOS9).